Here is a 508-residue protein sequence, read N- to C-terminus: UDP-N-acetylmuramoylalanine--D-glutamate ligase (508 aa).

G138–T144 contacts ATP.

Belongs to the MurCDEF family.

It localises to the cytoplasm. It carries out the reaction UDP-N-acetyl-alpha-D-muramoyl-L-alanine + D-glutamate + ATP = UDP-N-acetyl-alpha-D-muramoyl-L-alanyl-D-glutamate + ADP + phosphate + H(+). It participates in cell wall biogenesis; peptidoglycan biosynthesis. Functionally, cell wall formation. Catalyzes the addition of glutamate to the nucleotide precursor UDP-N-acetylmuramoyl-L-alanine (UMA). This is UDP-N-acetylmuramoylalanine--D-glutamate ligase from Bordetella avium (strain 197N).